A 211-amino-acid chain; its full sequence is Small ribosomal subunit protein uS5 (211 aa).

The S5 DRBM domain maps to 50–113 (LEDEVLDINM…DNAKINITRI (64 aa)).

This sequence belongs to the universal ribosomal protein uS5 family. In terms of assembly, part of the 30S ribosomal subunit. Contacts protein S4.

Functionally, with S4 and S12 plays an important role in translational accuracy. The polypeptide is Small ribosomal subunit protein uS5 (Methanococcoides burtonii (strain DSM 6242 / NBRC 107633 / OCM 468 / ACE-M)).